We begin with the raw amino-acid sequence, 362 residues long: Solute carrier family 25 member 3 (362 aa).

The transit peptide at 1 to 49 (MFSSVAHLARANPFNTPHLQLVHDGLGDLRSSSPGPTGQPRRPRNLAAA) directs the protein to the mitochondrion. At 50–63 (AVEEQYSCDYGSGR) the chain is on the mitochondrial intermembrane side. Solcar repeat units lie at residues 63–147 (RFFI…FKVL), 160–244 (WRTS…TVEA), and 261–339 (EQLV…VKVY). Residues 64 to 86 (FFILCGLGGIISCGTTHTALVPL) traverse the membrane as a helical segment. The Mitochondrial matrix portion of the chain corresponds to 87 to 121 (DLVKCRMQVDPQKYKGIFNGFSVTLKEDGVRGLAK). K99 is modified (N6-acetyllysine). N6-methyllysine is present on K112. A helical membrane pass occupies residues 122 to 141 (GWAPTFLGYSMQGLCKFGFY). At 142-161 (EVFKVLYSNMLGEENTYLWR) the chain is on the mitochondrial intermembrane side. A helical transmembrane segment spans residues 162–183 (TSLYLAASASAEFFADIALAPM). The Mitochondrial matrix segment spans residues 184–218 (EAAKVRIQTQPGYANTLRDAAPKMYKEEGLKAFYK). Y196 is subject to Phosphotyrosine. Residue K209 is modified to N6-acetyllysine. A helical transmembrane segment spans residues 219–238 (GVAPLWMRQIPYTMMKFACF). At 239 to 261 (ERTVEALYKFVVPKPRSECSKPE) the chain is on the mitochondrial intermembrane side. A helical transmembrane segment spans residues 262 to 284 (QLVVTFVAGYIAGVFCAIVSHPA). The Mitochondrial matrix segment spans residues 285-314 (DSVVSVLNKEKGSSASLVLKRLGFKGVWKG). A helical transmembrane segment spans residues 315–333 (LFARIIMIGTLTALQWFIY). Over 334-362 (DSVKVYFRLPRPPPPEMPESLKKKLGLTQ) the chain is Mitochondrial intermembrane.

Belongs to the mitochondrial carrier (TC 2.A.29) family. As to quaternary structure, interacts with PPIF; the interaction is impaired by CsA.

Its subcellular location is the mitochondrion inner membrane. The catalysed reaction is phosphate(in) + H(+)(in) = phosphate(out) + H(+)(out). In terms of biological role, inorganic ion transporter that transports phosphate or copper ions across the mitochondrial inner membrane into the matrix compartment. Mediates proton-coupled symport of phosphate ions necessary for mitochondrial oxidative phosphorylation of ADP to ATP. Transports copper ions probably in the form of anionic copper(I) complexes to maintain mitochondrial matrix copper pool and to supply copper for cytochrome C oxidase complex assembly. May also play a role in regulation of the mitochondrial permeability transition pore (mPTP). This is Solute carrier family 25 member 3 from Homo sapiens (Human).